The chain runs to 389 residues: Mannitol-1-phosphate 5-dehydrogenase (389 aa).

NAD(+) is bound at residue 7-18 (AVHFGGGNIGRG). K216 is an active-site residue.

The protein belongs to the mannitol dehydrogenase family. In terms of assembly, monomer.

The catalysed reaction is D-mannitol 1-phosphate + NAD(+) = beta-D-fructose 6-phosphate + NADH + H(+). In terms of biological role, catalyzes the NAD(H)-dependent interconversion of D-fructose 6-phosphate and D-mannitol 1-phosphate in the mannitol metabolic pathway. This chain is Mannitol-1-phosphate 5-dehydrogenase, found in Pyrenophora tritici-repentis (strain Pt-1C-BFP) (Wheat tan spot fungus).